The following is a 1358-amino-acid chain: Tenascin-R (1358 aa).

A signal peptide spans 1–31; that stretch reads MGADGETVVLKNMLIGINLILLGSMIKPSEC. Residues Thr36 and Thr37 are each glycosylated (O-linked (GalNAc...) threonine). Asn55 carries N-linked (GlcNAc...) asparagine glycosylation. A coiled-coil region spans residues 127 to 157; the sequence is CASSAQVLQELLSRIEMLEREVSVLRDQCNA. Ser176 is a glycosylation site (O-linked (Xyl...) (chondroitin sulfate) serine). Residues Asn180 and Asn198 are each glycosylated (N-linked (GlcNAc...) asparagine). 3 consecutive EGF-like domains span residues 188 to 199, 219 to 230, and 250 to 261; these read CICNEGWFGKNC, CICDSEYSGDDC, and CVCEEPYTGEDC. Ser271 carries an O-linked (Xyl...) (chondroitin sulfate) serine glycan. The N-linked (GlcNAc...) asparagine glycan is linked to Asn278. The EGF-like 4 domain occupies 281–292; it reads CLCEEGYVGEDC. Intrachain disulfides connect Cys292/Cys301, Cys297/Cys312, and Cys314/Cys323. O-linked (Xyl...) (chondroitin sulfate) serine glycosylation occurs at Ser302. The EGF-like 5 domain occupies 312 to 323; it reads CVCEEGYQGPDC. Fibronectin type-III domains lie at 328–420, 421–505, 506–595, 596–687, 688–777, 778–865, 866–955, 956–1042, and 1043–1130; these read PPED…TPQG, LQFK…TVID, GPTQ…TEID, APKN…TELD, SPRD…FRPI, SHLH…TGID, PPKD…AMDN, PVDL…TLLD, and PPAN…TGGR. N-linked (GlcNAc...) asparagine glycans are attached at residues Asn392, Asn470, and Asn581. Phosphoserine is present on Ser724. Asn791, Asn874, Asn1036, Asn1046, and Asn1261 each carry an N-linked (GlcNAc...) asparagine glycan. A Fibrinogen C-terminal domain is found at 1129–1344; sequence GRVFPHPQDC…FVEMKMRPYN (216 aa).

This sequence belongs to the tenascin family. In terms of assembly, forms oligomers. Interacts with CNTN1, TNC, and FN1. Interacts with BCAN and ACAN in a calcium-dependent manner. Interacts with SCN2B, PTPRZ1, and CSPG3. Post-translationally, contains N-linked oligosaccharides, O-linked sialylated structures and O-linked chondroitin sulfate glycosaminoglycans. Contains N-linked oligosaccharides with a sulfated carbohydrate structure. O-glycosylated on Thr-36 or Thr-37 with a core 1 or possibly core 8 glycan. In terms of tissue distribution, brain specific.

The protein resides in the secreted. Its subcellular location is the extracellular space. The protein localises to the extracellular matrix. In terms of biological role, neural extracellular matrix (ECM) protein involved in interactions with different cells and matrix components. These interactions can influence cellular behavior by either evoking a stable adhesion and differentiation, or repulsion and inhibition of neurite growth. Binding to cell surface gangliosides inhibits RGD-dependent integrin-mediated cell adhesion and results in an inhibition of PTK2/FAK1 (FAK) phosphorylation and cell detachment. Binding to membrane surface sulfatides results in a oligodendrocyte adhesion and differentiation. Interaction with CNTN1 induces a repulsion of neurons and an inhibition of neurite outgrowth. Interacts with SCN2B may play a crucial role in clustering and regulation of activity of sodium channels at nodes of Ranvier. TNR-linked chondroitin sulfate glycosaminoglycans are involved in the interaction with FN1 and mediate inhibition of cell adhesion and neurite outgrowth. The highly regulated addition of sulfated carbohydrate structure may modulate the adhesive properties of TNR over the course of development and during synapse maintenance. This chain is Tenascin-R (TNR), found in Homo sapiens (Human).